The sequence spans 414 residues: L-cysteine:1D-myo-inositol 2-amino-2-deoxy-alpha-D-glucopyranoside ligase (414 aa).

Cys43 serves as a coordination point for Zn(2+). L-cysteinyl-5'-AMP contacts are provided by residues 43-46 (CGIT), Thr58, and 81-83 (NVT). Residues 45–55 (ITPYDATHLGH) carry the 'HIGH' region motif. Residues 187–192 (ERGGDP) carry the 'ERGGDP' region motif. An L-cysteinyl-5'-AMP-binding site is contributed by Trp227. Cys231 is a binding site for Zn(2+). Residue 249–251 (GSD) coordinates L-cysteinyl-5'-AMP. His256 serves as a coordination point for Zn(2+). Residue Ile283 coordinates L-cysteinyl-5'-AMP. The short motif at 289–293 (KMSKS) is the 'KMSKS' region element.

The protein belongs to the class-I aminoacyl-tRNA synthetase family. MshC subfamily. Monomer. It depends on Zn(2+) as a cofactor.

It catalyses the reaction 1D-myo-inositol 2-amino-2-deoxy-alpha-D-glucopyranoside + L-cysteine + ATP = 1D-myo-inositol 2-(L-cysteinylamino)-2-deoxy-alpha-D-glucopyranoside + AMP + diphosphate + H(+). Catalyzes the ATP-dependent condensation of GlcN-Ins and L-cysteine to form L-Cys-GlcN-Ins. This is L-cysteine:1D-myo-inositol 2-amino-2-deoxy-alpha-D-glucopyranoside ligase from Tsukamurella paurometabola (strain ATCC 8368 / DSM 20162 / CCUG 35730 / CIP 100753 / JCM 10117 / KCTC 9821 / NBRC 16120 / NCIMB 702349 / NCTC 13040) (Corynebacterium paurometabolum).